The sequence spans 201 residues: Recombination protein RecR (201 aa).

Residues 57 to 72 (CADCRTFTEQEVCNIC) form a C4-type zinc finger. The region spanning 81 to 176 (GQICVVESPA…EASRIAHGVP (96 aa)) is the Toprim domain.

It belongs to the RecR family.

In terms of biological role, may play a role in DNA repair. It seems to be involved in an RecBC-independent recombinational process of DNA repair. It may act with RecF and RecO. This is Recombination protein RecR from Shigella boydii serotype 18 (strain CDC 3083-94 / BS512).